The following is a 227-amino-acid chain: Lipoprotein-releasing system ATP-binding protein LolD (227 aa).

An ABC transporter domain is found at 6–227 (LVLDDIQKSY…RLDEGVLVSA (222 aa)). Position 43 to 50 (43 to 50 (APSGAGKS)) interacts with ATP.

Belongs to the ABC transporter superfamily. Lipoprotein translocase (TC 3.A.1.125) family. In terms of assembly, the complex is composed of two ATP-binding proteins (LolD) and two transmembrane proteins (LolC and LolE).

The protein localises to the cell inner membrane. In terms of biological role, part of the ABC transporter complex LolCDE involved in the translocation of mature outer membrane-directed lipoproteins, from the inner membrane to the periplasmic chaperone, LolA. Responsible for the formation of the LolA-lipoprotein complex in an ATP-dependent manner. This Jannaschia sp. (strain CCS1) protein is Lipoprotein-releasing system ATP-binding protein LolD.